Here is a 550-residue protein sequence, read N- to C-terminus: Iduronate 2-sulfatase (550 aa).

Residues 1-25 form the signal peptide; that stretch reads MPPPRTGRGLLWLGLVLSSVCVALG. A propeptide spanning residues 26-33 is cleaved from the precursor; the sequence is SETQANST. Ca(2+) contacts are provided by aspartate 45, aspartate 46, and cysteine 84. Cysteine 84 functions as the Nucleophile in the catalytic mechanism. The residue at position 84 (cysteine 84) is a 3-oxoalanine (Cys). N-linked (GlcNAc...) asparagine glycosylation is present at asparagine 115. Histidine 138 is an active-site residue. Asparagine 144 carries an N-linked (GlcNAc...) asparagine glycan. Cysteines 171 and 184 form a disulfide. N-linked (GlcNAc...) asparagine glycans are attached at residues asparagine 246, asparagine 280, and asparagine 325. The Ca(2+) site is built by aspartate 334 and histidine 335. Cysteine 422 and cysteine 432 form a disulfide bridge. Asparagine 513 and asparagine 537 each carry an N-linked (GlcNAc...) asparagine glycan.

The protein belongs to the sulfatase family. As to quaternary structure, monomer. The 58-kDa mature form is composed of two chains resulting from proteolitic processing, the 42-kDa chain and the 14-kDa chain that remain stably associated and form the 58-kDa intermediate form which is enzymatically active. Ca(2+) is required as a cofactor. In terms of processing, synthesized as a 75-kDa precursor form in the endoplasmic reticulum (ER), and then processed by proteolytic cleavage through various intermediates to yield a 55-kDa mature form, with the release of an 18 kDa polypeptide. The conversion to 3-oxoalanine (also known as C-formylglycine, FGly), of a serine or cysteine residue in prokaryotes and of a cysteine residue in eukaryotes, is critical for catalytic activity. As to expression, liver, kidney, lung, and placenta.

It localises to the lysosome. It carries out the reaction Hydrolysis of the 2-sulfate groups of the L-iduronate 2-sulfate units of dermatan sulfate, heparan sulfate and heparin.. In terms of biological role, lysosomal enzyme involved in the degradation pathway of dermatan sulfate and heparan sulfate. This Homo sapiens (Human) protein is Iduronate 2-sulfatase (IDS).